The following is a 350-amino-acid chain: Histidinol-phosphate aminotransferase 2 (350 aa).

At Lys-210 the chain carries N6-(pyridoxal phosphate)lysine.

This sequence belongs to the class-II pyridoxal-phosphate-dependent aminotransferase family. Histidinol-phosphate aminotransferase subfamily. As to quaternary structure, homodimer. It depends on pyridoxal 5'-phosphate as a cofactor.

The enzyme catalyses L-histidinol phosphate + 2-oxoglutarate = 3-(imidazol-4-yl)-2-oxopropyl phosphate + L-glutamate. It functions in the pathway amino-acid biosynthesis; L-histidine biosynthesis; L-histidine from 5-phospho-alpha-D-ribose 1-diphosphate: step 7/9. The sequence is that of Histidinol-phosphate aminotransferase 2 from Mannheimia succiniciproducens (strain KCTC 0769BP / MBEL55E).